We begin with the raw amino-acid sequence, 239 residues long: Ribitol-5-phosphate cytidylyltransferase (239 aa).

CTP is bound by residues 7–10 (FAGG) and 80–86 (GETGQMS).

The protein belongs to the IspD/TarI cytidylyltransferase family. TarI subfamily.

It catalyses the reaction D-ribitol 5-phosphate + CTP + H(+) = CDP-L-ribitol + diphosphate. Its pathway is cell wall biogenesis; poly(ribitol phosphate) teichoic acid biosynthesis. Catalyzes the transfer of the cytidylyl group of CTP to D-ribitol 5-phosphate. This Streptococcus agalactiae serotype Ia (strain ATCC 27591 / A909 / CDC SS700) protein is Ribitol-5-phosphate cytidylyltransferase.